Consider the following 2779-residue polypeptide: Protein lava lamp (2779 aa).

Disordered regions lie at residues 31–62 (LAGSSNDLSSLQNVSASTTRGTKGKGRLDSLK), 79–98 (ALRKSQDERHKSSMSDSMES), and 110–135 (KTRSGDSSTPLVSPTKDSDPGDVSLL). The segment covering 33 to 51 (GSSNDLSSLQNVSASTTRG) has biased composition (polar residues). A phosphoserine mark is found at serine 34 and serine 35. Residues 52-85 (TKGKGRLDSLKENLYKQQERLTALKERALRKSQD) are a coiled coil. The segment covering 79–91 (ALRKSQDERHKSS) has biased composition (basic and acidic residues). Residues serine 95, serine 98, serine 122, and serine 133 each carry the phosphoserine modification. Residues 141-175 (EKLLMLTQRTEQNRALLEQRKRDLAKSLLSVKSNI) adopt a coiled-coil conformation. A phosphoserine mark is found at serine 186, serine 352, and serine 354. Coiled-coil stretches lie at residues 220 to 607 (ESRV…AESI) and 659 to 716 (GETL…KDLI). Basic and acidic residues predominate over residues 337-352 (ERQRNLELEQEQEKAS). Disordered regions lie at residues 337 to 366 (ERQRNLELEQEQEKASRSPQSEAAHTDAQV), 622 to 662 (RPAS…GETL), 711 to 730 (REKDLISSTSTSSNLSQELS), and 1716 to 1753 (QAQLARQQHQQQQQQHHHPAVQSQQHPPPASLFFGGDA). 2 stretches are compositionally biased toward low complexity: residues 717–730 (SSTSTSSNLSQELS) and 1716–1740 (QAQLARQQHQQQQQQHHHPAVQSQQ). 3 coiled-coil regions span residues 751-1733 (LFEK…QHHH), 1785-1863 (TIED…KLIQ), and 1941-2433 (NEAP…QSQN). Disordered regions lie at residues 2348-2367 (EDKEDQQVSAAPPKDDGETV), 2484-2507 (EEVTQQQQRELPQSQQSTQGEATS), 2552-2578 (NRGGASGGNPASTTVSAGGPPSLTANE), and 2633-2665 (TERSRVSDEPSATASSSAASSSSPSKISSAGSN). Residues 2488–2502 (QQQQRELPQSQQSTQ) show a composition bias toward low complexity. A coiled-coil region spans residues 2504 to 2544 (EATSDIMQKMQKALETQEMEIVTLKEQLAIRSAEYARLAAQ). Positions 2600–2641 (DMRVEEMIVELVQLLEERDHLQLKLSDTLRQLETERSRVSDE) form a coiled coil. Low complexity predominate over residues 2643-2665 (SATASSSAASSSSPSKISSAGSN).

Interacts with CLIP-190 and spectrin separately.

It is found in the golgi apparatus. The protein localises to the cytoplasmic vesicle. Its subcellular location is the autophagosome. Lva and spectrin may form a Golgi-based scaffold that mediates interaction of Golgi bodies with microtubules and facilitates Golgi-derived membrane secretion required for the formation of furrows during cellularization. Under starvation conditions recruited by ema to developing autophagsosomes where it may function in autophagosome growth. This is Protein lava lamp (lva) from Drosophila melanogaster (Fruit fly).